Consider the following 218-residue polypeptide: Adenylate kinase (218 aa).

10 to 15 provides a ligand contact to ATP; that stretch reads GAGKGT. Positions 30–59 are NMP; sequence STGDMFRAAMANQTEMGRLAKSFIDKGELV. AMP-binding positions include T31, R36, 57 to 59, 86 to 89, and Q93; these read ELV and GYPR. Residues 127–165 are LID; that stretch reads GRFICRSCGSTYHKVFNPTKVEGTCDVCGGHEFFQREDD. R128 is an ATP binding site. C131 and C134 together coordinate Zn(2+). 137–138 provides a ligand contact to ATP; it reads TY. Residues C151 and C154 each coordinate Zn(2+). Positions 162 and 173 each coordinate AMP. Position 201 (Q201) interacts with ATP.

The protein belongs to the adenylate kinase family. In terms of assembly, monomer.

The protein resides in the cytoplasm. It carries out the reaction AMP + ATP = 2 ADP. Its pathway is purine metabolism; AMP biosynthesis via salvage pathway; AMP from ADP: step 1/1. Catalyzes the reversible transfer of the terminal phosphate group between ATP and AMP. Plays an important role in cellular energy homeostasis and in adenine nucleotide metabolism. This chain is Adenylate kinase, found in Streptococcus thermophilus (strain CNRZ 1066).